The primary structure comprises 305 residues: Spermatogenesis-associated protein 4 (305 aa).

The region spanning S49 to R155 is the Calponin-homology (CH) domain.

As to expression, highly expressed in testis, the expression is observed precisely in seminiferous tubules.

The protein resides in the nucleus. Its function is as follows. May play a role in apoptosis regulation. The protein is Spermatogenesis-associated protein 4 (SPATA4) of Homo sapiens (Human).